The primary structure comprises 161 residues: Cyclic pyranopterin monophosphate synthase (161 aa).

Substrate contacts are provided by residues 75–77 (LCH) and 113–114 (ME). The active site involves Asp128.

Belongs to the MoaC family. Homohexamer; trimer of dimers.

It carries out the reaction (8S)-3',8-cyclo-7,8-dihydroguanosine 5'-triphosphate = cyclic pyranopterin phosphate + diphosphate. The protein operates within cofactor biosynthesis; molybdopterin biosynthesis. Its function is as follows. Catalyzes the conversion of (8S)-3',8-cyclo-7,8-dihydroguanosine 5'-triphosphate to cyclic pyranopterin monophosphate (cPMP). In Methylobacillus flagellatus (strain ATCC 51484 / DSM 6875 / VKM B-1610 / KT), this protein is Cyclic pyranopterin monophosphate synthase.